We begin with the raw amino-acid sequence, 277 residues long: Large ribosomal subunit protein uL2 (277 aa).

Residues 219–277 are disordered; sequence TVRGSVMNPNDHPHGGGEGKAPVGRKAPSTPWGKPALGLKTRNKKAKSDKLIVRRRNQK.

It belongs to the universal ribosomal protein uL2 family. In terms of assembly, part of the 50S ribosomal subunit. Forms a bridge to the 30S subunit in the 70S ribosome.

In terms of biological role, one of the primary rRNA binding proteins. Required for association of the 30S and 50S subunits to form the 70S ribosome, for tRNA binding and peptide bond formation. It has been suggested to have peptidyltransferase activity; this is somewhat controversial. Makes several contacts with the 16S rRNA in the 70S ribosome. This Streptococcus suis (strain 98HAH33) protein is Large ribosomal subunit protein uL2.